A 554-amino-acid polypeptide reads, in one-letter code: 3-(3-hydroxy-phenyl)propionate/3-hydroxycinnamic acid hydroxylase (554 aa).

FAD-binding positions include 17–46 (QVAI…VVEK) and 285–295 (FRINRVLLAGD).

This sequence belongs to the PheA/TfdB FAD monooxygenase family. Requires FAD as cofactor.

The enzyme catalyses 3-(3-hydroxyphenyl)propanoate + NADH + O2 + H(+) = 3-(2,3-dihydroxyphenyl)propanoate + NAD(+) + H2O. The catalysed reaction is (2E)-3-(3-hydroxyphenyl)prop-2-enoate + NADH + O2 + H(+) = (2E)-3-(2,3-dihydroxyphenyl)prop-2-enoate + NAD(+) + H2O. It participates in aromatic compound metabolism; 3-phenylpropanoate degradation. In terms of biological role, catalyzes the insertion of one atom of molecular oxygen into position 2 of the phenyl ring of 3-(3-hydroxyphenyl)propionate (3-HPP) and hydroxycinnamic acid (3HCI). The sequence is that of 3-(3-hydroxy-phenyl)propionate/3-hydroxycinnamic acid hydroxylase from Klebsiella pneumoniae subsp. pneumoniae (strain ATCC 700721 / MGH 78578).